The following is a 56-amino-acid chain: Venom peptide 5 (56 aa).

An N-terminal signal peptide occupies residues Met1–Ala26. Residues Val27–Ala42 constitute a propeptide that is removed on maturation. A disulfide bond links Cys49 and Cys54.

In terms of processing, probably contains 1 disulfide bond, which may be crucial for activity, since the linear peptide without disulfide bond is inactive. In terms of tissue distribution, expressed by the venom gland.

It is found in the secreted. The polypeptide is Venom peptide 5 (Eumenes pomiformis (Potter wasp)).